Consider the following 1224-residue polypeptide: Potassium channel subfamily T member 1 (1224 aa).

Residues 1 to 37 (MARAKLPRSPSEGKAGPGDTPAGAAAPEEPHGLSPLL) are disordered. At 1-79 (MARAKLPRSP…LFFIKNQRSS (79 aa)) the chain is on the cytoplasmic side. Over residues 13–27 (GKAGPGDTPAGAAAP) the composition is skewed to low complexity. The helical transmembrane segment at 80-112 (LRIRLFNFSLKLLTCLLYIVRVLLDNPDQGIGC) threads the bilayer. The Extracellular segment spans residues 113 to 139 (WGCTKYNYTFNGSSSEFHWAPILWVER). 2 N-linked (GlcNAc...) asparagine glycosylation sites follow: N119 and N123. The helical transmembrane segment at 140–164 (KMALWVIQVIVATISFLETMLIIYL) threads the bilayer. The Cytoplasmic segment spans residues 165–178 (SYKGNIWEQIFHVS). A helical membrane pass occupies residues 179-194 (FVLEMINTLPFIITVF). At 195 to 201 (WPPLRNL) the chain is on the extracellular side. Residues 202-219 (FIPVFLNCWLAKHALENM) form a helical membrane-spanning segment. Residues 220 to 232 (INDFHRAILRTQS) are Cytoplasmic-facing. A helical transmembrane segment spans residues 233–260 (AMFNQVLILFCTLLCLVFTGTCGIQHLE). Residues 261–267 (RAGGNLN) lie on the Extracellular side of the membrane. Positions 268–288 (LLTSFYFCIVTFSTVGFGDVT) form an intramembrane region, pore-forming. Residues V282 and G283 each contribute to the K(+) site. Residues 289–290 (PK) lie on the Extracellular side of the membrane. A helical membrane pass occupies residues 291-324 (IWPSQLLVVILICVTLVVLPLQFEELVYLWMERQ). Topologically, residues 325–1224 (KSGGNYSRHR…NPETRDETQL (900 aa)) are cytoplasmic. Residues 338 to 474 (EKHVVLCVSS…FHVKFADHVV (137 aa)) enclose the RCK N-terminal 1 domain. Positions 499, 502, 524, and 526 each coordinate Na(+). Residues 644–675 (QNTDCRPSQGGSGGDGTKLTLPTENGSGSRRP) are disordered. Positions 663 to 673 (TLPTENGSGSR) are enriched in polar residues. Zn(2+)-binding residues include C744 and C745. Positions 747 and 750 each coordinate K(+). Residues R747 and K750 each contribute to the Na(+) site. Zn(2+) is bound by residues C752 and H754. Residues N755, Y757, Y763, and G764 each contribute to the K(+) site. Residue Y757 coordinates Na(+). F765 contributes to the Na(+) binding site. One can recognise an RCK N-terminal 2 domain in the interval 767-907 (NKLIIVSAET…QFRAKDSYSL (141 aa)). 5 residues coordinate K(+): S773, L804, D806, G828, and D851. Disordered regions lie at residues 1038-1066 (REAK…ADPV) and 1198-1224 (SSSQ…ETQL). Low complexity-rich tracts occupy residues 1045–1055 (GTRAASGSGST) and 1198–1215 (SSSQ…SSCN).

The protein belongs to the potassium channel family. Calcium-activated (TC 1.A.1.3) subfamily. KCa4.1/KCNT1 sub-subfamily. As to quaternary structure, homotetramer; which constitutes the Na(+)-activated K(+) channel. Interacts with KCNT2; these heterodimer channels differ from the homomers in their unitary conductance, kinetic behavior, subcellular localization, and response to activation of protein kinase C. Interacts (via C-terminus) with FMR1; this interaction alters gating properties of KCNT1. Interacts with CRBN via its cytoplasmic C-terminus. Post-translationally, phosphorylated by protein kinase C. Phosphorylation of the C-terminal domain increases channel activity. Enriched in the brainstem and olfactory bulb and detected at significant levels in four different brain regions.

It localises to the cell membrane. It carries out the reaction K(+)(in) = K(+)(out). With respect to regulation, activated by high intracellular Na(+). In addition to activation by Na(+), is cooperatively activated by intracellular Cl(-) levels. Inhibited by Zn(2+). Activated upon stimulation of G-protein coupled receptors, such as CHRM1 and GRIA1. Its function is as follows. Sodium-activated K(+) channel. Acts as an important mediator of neuronal membrane excitability. Contributes to the delayed outward currents. Regulates neuronal bursting in sensory neurons. Contributes to synaptic development and plasticity. The chain is Potassium channel subfamily T member 1 (Kcnt1) from Mus musculus (Mouse).